Reading from the N-terminus, the 439-residue chain is MLNSYVVREVSNDKLKWEYEFAVDKKYFLDQLDSKLSEIAMNVKVPGFRVGKASIDLVRKEYLNEAMTSVVKKTIESTSSDFVKNSKFGEIISSNIDIVSYPSYYSDNDKEEDLVYKLSFEVMPEAPLMDIDNIVLSDIEVDIQECDVNEFIENLKKQRPDFVIVDDPEYVIQGSDKLVIDYQNKIKGKILRGGSAKDFVLVLGKGVALREFEDQLIGMKVGESKTFPLTFPNDYGMVHLAGKTTDMSVTVKSVYVMKGMRDSEAIAKDYGFKDVGHMEDFARKRIKQQFDQMVFTIVKKELFDYMDANYVIDVPECVVTQEIAKINKEIRDSGEDIQIDVEKEAIKRVKLGMLLIKMSRHNNITIKNEDVFSFIQSNYADYGVDIGNVLKMLQSNKNFANYISGKVLEEKVINYIIGLAKKDKKVMTAKDISLMFENI.

A PPIase FKBP-type domain is found at serine 175–methionine 260.

It belongs to the FKBP-type PPIase family. Tig subfamily.

It localises to the cytoplasm. It carries out the reaction [protein]-peptidylproline (omega=180) = [protein]-peptidylproline (omega=0). In terms of biological role, involved in protein export. Acts as a chaperone by maintaining the newly synthesized protein in an open conformation. Functions as a peptidyl-prolyl cis-trans isomerase. The polypeptide is Trigger factor (Ehrlichia chaffeensis (strain ATCC CRL-10679 / Arkansas)).